Here is a 308-residue protein sequence, read N- to C-terminus: Protoheme IX farnesyltransferase (308 aa).

A run of 8 helical transmembrane segments spans residues 31 to 51 (VIEL…RGTV), 53 to 73 (PLLI…ANAL), 102 to 122 (NALV…WWTT), 124 to 144 (LLSG…YTLL), 149 to 169 (TSQN…IGWS), 170 to 190 (AVTG…FFWT), 240 to 260 (LALA…VWFL), and 288 to 308 (YLAV…PHLF).

This sequence belongs to the UbiA prenyltransferase family. Protoheme IX farnesyltransferase subfamily.

It is found in the cell membrane. The enzyme catalyses heme b + (2E,6E)-farnesyl diphosphate + H2O = Fe(II)-heme o + diphosphate. It participates in porphyrin-containing compound metabolism; heme O biosynthesis; heme O from protoheme: step 1/1. Functionally, converts heme B (protoheme IX) to heme O by substitution of the vinyl group on carbon 2 of heme B porphyrin ring with a hydroxyethyl farnesyl side group. This chain is Protoheme IX farnesyltransferase, found in Mycobacterium avium (strain 104).